We begin with the raw amino-acid sequence, 236 residues long: tRNA (guanine-N(1)-)-methyltransferase (236 aa).

S-adenosyl-L-methionine-binding positions include G112 and V132–L137.

This sequence belongs to the RNA methyltransferase TrmD family. As to quaternary structure, homodimer.

Its subcellular location is the cytoplasm. It catalyses the reaction guanosine(37) in tRNA + S-adenosyl-L-methionine = N(1)-methylguanosine(37) in tRNA + S-adenosyl-L-homocysteine + H(+). Specifically methylates guanosine-37 in various tRNAs. The protein is tRNA (guanine-N(1)-)-methyltransferase of Campylobacter curvus (strain 525.92).